The chain runs to 381 residues: UDP-4-amino-4-deoxy-L-arabinose--oxoglutarate aminotransferase (381 aa).

Lys-182 is subject to N6-(pyridoxal phosphate)lysine.

It belongs to the DegT/DnrJ/EryC1 family. ArnB subfamily. Homodimer. Pyridoxal 5'-phosphate is required as a cofactor.

It catalyses the reaction UDP-4-amino-4-deoxy-beta-L-arabinose + 2-oxoglutarate = UDP-beta-L-threo-pentopyranos-4-ulose + L-glutamate. It participates in nucleotide-sugar biosynthesis; UDP-4-deoxy-4-formamido-beta-L-arabinose biosynthesis; UDP-4-deoxy-4-formamido-beta-L-arabinose from UDP-alpha-D-glucuronate: step 2/3. It functions in the pathway bacterial outer membrane biogenesis; lipopolysaccharide biosynthesis. Its function is as follows. Catalyzes the conversion of UDP-4-keto-arabinose (UDP-Ara4O) to UDP-4-amino-4-deoxy-L-arabinose (UDP-L-Ara4N). The modified arabinose is attached to lipid A and is required for resistance to polymyxin and cationic antimicrobial peptides. The chain is UDP-4-amino-4-deoxy-L-arabinose--oxoglutarate aminotransferase from Proteus mirabilis (strain HI4320).